The primary structure comprises 600 residues: MPQRQPPGTEEGWYILHDFRSIDWDAWRDAPDRERERALETGTDYLQAHVDLKDAEEGASAVFSILGHKADFMVLHLRPTLDHLDHAERRFESTALAEFTEQSSSYVSVTEVSGYMHEELTDGLDDLEDEGMRNYMKQRIYPELPDADHVCFYPMSKRRGPDHNWYDLPFDERREYMSNHGDVGRQYADKVSQIIAGSIGFDDYEWGITLFADDPTDIKDLLYEMRFDPSSSKFAEFGPFYIGQQFEPSELSSLFAAEPLTSETGHGGADSQTSSESSGGRPSTDPSHDEIAAEDLESRLGRFGVDLEEYPAAGYALCFESSADAEAVSDEVDGLRENFDHYDTHVMTTVRAEGGETAAISLWKNERAATTASGFLGDLPGAAEGVGAPLDGSGDAATHGTDEDDEIRGELADADIYAGQPHGEDVYALVLYSEADPDELRDELGALAEHFERYDTHIKSAVYDAEVGGDRTAVVSLWDEKDAADTAAEHLSDLPDIVARAGEDEESGFGTMGMFYTVKPDYREDFVETFDEVGGLLADMDGHLETQLMVNEDDENDMFIASQWRDKEAAMAFFRSDAFRETVEYGREVLADRPRHVFLA.

His180 is a heme binding site. Positions 261-289 (TSETGHGGADSQTSSESSGGRPSTDPSHD) are disordered. Polar residues predominate over residues 270–285 (DSQTSSESSGGRPSTD). The region spanning 510-598 (GTMGMFYTVK…VLADRPRHVF (89 aa)) is the ABM domain.

This sequence in the N-terminal section; belongs to the ChdC family.

This chain is Putative heme-binding protein NP_2262A, found in Natronomonas pharaonis (strain ATCC 35678 / DSM 2160 / CIP 103997 / JCM 8858 / NBRC 14720 / NCIMB 2260 / Gabara) (Halobacterium pharaonis).